Here is a 327-residue protein sequence, read N- to C-terminus: Glutamyl endopeptidase (327 aa).

Positions 1–29 (MKGKFLKVSSLFVATLTTATLVSSPAANA) are cleaved as a signal peptide. Positions 30–68 (LSSKAMDNHPQQSQSSKQQTPKIQKGGNLKPLEQREHAN) are excised as a propeptide. The segment at 33–61 (KAMDNHPQQSQSSKQQTPKIQKGGNLKPL) is disordered. A compositionally biased stretch (low complexity) spans 40–54 (QQSQSSKQQTPKIQK). Active-site charge relay system residues include His119, Asp161, and Ser237. Residues 283 to 327 (FANDDQPNNPDNPDNPNNPDNPNNPNNPDNPDNGDNNNSDNPDAA) are disordered. The segment covering 286 to 327 (DDQPNNPDNPDNPNNPDNPNNPNNPDNPDNGDNNNSDNPDAA) has biased composition (low complexity). 9 repeat units span residues 289–291 (PNN), 292–294 (PDN), 295–297 (PDN), 298–300 (PNN), 301–303 (PDN), 304–306 (PNN), 307–309 (PNN), 310–312 (PDN), and 313–315 (PDN). The tract at residues 289-315 (PNNPDNPDNPNNPDNPNNPNNPDNPDN) is 9 X 3 AA repeats of P-[DN]-N.

Belongs to the peptidase S1B family. In terms of processing, proteolytically cleaved by aureolysin (aur). This cleavage leads to the activation of SspA.

Its subcellular location is the secreted. The enzyme catalyses Preferential cleavage: Glu-|-Xaa, Asp-|-Xaa.. Functionally, preferentially cleaves peptide bonds on the carboxyl-terminal side of aspartate and glutamate. Along with other extracellular proteases it is involved in colonization and infection of human tissues. Required for proteolytic maturation of thiol protease SspB and inactivation of SspC, an inhibitor of SspB. It is the most important protease for degradation of fibronectin-binding protein (FnBP) and surface protein A, which are involved in adherence to host cells. May also protect bacteria against host defense mechanism by cleaving the immunoglobulin classes IgG, IgA and IgM. May be involved in the stability of secreted lipases. This is Glutamyl endopeptidase (sspA) from Staphylococcus aureus (strain MW2).